The sequence spans 506 residues: MTQAVMLQGTASDVGKSVLAAGLCRIFYQDGLRTAPFKSQNMALNSGITPDGKEMGRAQIFQAEAAGIMPDVRMNPVLLKPTSDRQAQIVLMGKVATNMDAVSYHDYKPRLREQILAVYNSLAREYDVIVLEGAGSPAEINLRDRDIVNMGMAEMAQCPVILVADIDRGGVFAAIYGTLALLHKQERDRVKGVIINKFRGDVALLYSGIEQIESLTGVPVLGVMPWLDVDLEDEDGVTLQNGKYKGNDDRDITIAIVQLPHISNFTDFNALAAQPDVRIRYVRRPEELADVDLAILPGSKNTLSDLAWLRESGMADAVLQTHRQGVPVMGICGGYQMLGDTIVDEVESGLGTQPGLGLLNTITRFAQDKTTTQVNATMSGELPGWLAAAAGLPVRGYEIHMGETVLQEGCCTAMTLQKNGCPVADGAVTADGLAFGTYLHGLFDSDAFTRAVVNGLRARKGLAPWETTFCYAEHKARQFDLLAEAMRQHIDIDKIYTIMQQHQEPV.

The GATase cobBQ-type domain occupies Asp-251–Phe-448. Cys-332 serves as the catalytic Nucleophile. His-440 is an active-site residue.

It belongs to the CobB/CobQ family. CobQ subfamily.

Its pathway is cofactor biosynthesis; adenosylcobalamin biosynthesis. Functionally, catalyzes amidations at positions B, D, E, and G on adenosylcobyrinic A,C-diamide. NH(2) groups are provided by glutamine, and one molecule of ATP is hydrogenolyzed for each amidation. The polypeptide is Cobyric acid synthase (Salmonella arizonae (strain ATCC BAA-731 / CDC346-86 / RSK2980)).